The primary structure comprises 980 residues: Valine--tRNA ligase (980 aa).

A 'HIGH' region motif is present at residues Pro43–His53. The 'KMSKS' region motif lies at Lys586–Ser590. Position 589 (Lys589) interacts with ATP. Residues Leu914–Leu980 adopt a coiled-coil conformation.

Belongs to the class-I aminoacyl-tRNA synthetase family. ValS type 1 subfamily. As to quaternary structure, monomer.

The protein resides in the cytoplasm. The enzyme catalyses tRNA(Val) + L-valine + ATP = L-valyl-tRNA(Val) + AMP + diphosphate. Catalyzes the attachment of valine to tRNA(Val). As ValRS can inadvertently accommodate and process structurally similar amino acids such as threonine, to avoid such errors, it has a 'posttransfer' editing activity that hydrolyzes mischarged Thr-tRNA(Val) in a tRNA-dependent manner. The chain is Valine--tRNA ligase from Xanthomonas oryzae pv. oryzae (strain PXO99A).